The primary structure comprises 390 residues: S-adenosylmethionine synthase 3 (390 aa).

Mg(2+) is bound at residue Glu-9. His-15 lines the ATP pocket. Position 43 (Glu-43) interacts with K(+). 2 residues coordinate L-methionine: Glu-56 and Gln-99. Residues 167–169 (DGK), 235–238 (SGRF), Asp-246, 252–253 (RK), Ala-269, Lys-273, and Lys-277 contribute to the ATP site. L-methionine is bound at residue Asp-246. L-methionine is bound at residue Lys-277.

The protein belongs to the AdoMet synthase family. Homotetramer. The cofactor is Mn(2+). Requires Mg(2+) as cofactor. Co(2+) serves as cofactor. It depends on K(+) as a cofactor. In terms of tissue distribution, mostly expressed in stems and leaves.

Its subcellular location is the cytoplasm. The catalysed reaction is L-methionine + ATP + H2O = S-adenosyl-L-methionine + phosphate + diphosphate. Its pathway is amino-acid biosynthesis; S-adenosyl-L-methionine biosynthesis; S-adenosyl-L-methionine from L-methionine: step 1/1. Catalyzes the formation of S-adenosylmethionine from methionine and ATP. The reaction comprises two steps that are both catalyzed by the same enzyme: formation of S-adenosylmethionine (AdoMet) and triphosphate, and subsequent hydrolysis of the triphosphate. The chain is S-adenosylmethionine synthase 3 (SAM3) from Solanum lycopersicum (Tomato).